The following is a 160-amino-acid chain: Putative antiporter subunit mnhE2 (160 aa).

3 helical membrane-spanning segments follow: residues 22–42 (HFKF…IYIL), 55–75 (IWVA…SSIS), and 100–120 (SDWS…STVI).

Belongs to the CPA3 antiporters (TC 2.A.63) subunit E family. In terms of assembly, may form a heterooligomeric complex that consists of seven subunits: mnhA2, mnhB2, mnhC2, mnhD2, mnhE2, mnhF2 and mnhG2.

The protein localises to the cell membrane. This is Putative antiporter subunit mnhE2 (mnhE2) from Staphylococcus aureus (strain USA300).